A 188-amino-acid chain; its full sequence is MLQLHPSEIKDIVLNGGVIAYPTEAVYGLGCDPDNDTAIQKLLAVKQRPWQKGLILVASEFSQLVDYVDESQLSAEQLEFAFSKWPGPFTFVMPIKPHVSRYLCGEFDSIAVRVSAHEGVRALCQALGKPLVSTSANLAGEDPALSGDEILNAFEGKIDALVLGSLGEQRQPSTIIDARSGKILRNGQ.

A YrdC-like domain is found at Q3 to Q188.

This sequence belongs to the SUA5 family. TsaC subfamily.

Its subcellular location is the cytoplasm. It catalyses the reaction L-threonine + hydrogencarbonate + ATP = L-threonylcarbamoyladenylate + diphosphate + H2O. In terms of biological role, required for the formation of a threonylcarbamoyl group on adenosine at position 37 (t(6)A37) in tRNAs that read codons beginning with adenine. Catalyzes the conversion of L-threonine, HCO(3)(-)/CO(2) and ATP to give threonylcarbamoyl-AMP (TC-AMP) as the acyladenylate intermediate, with the release of diphosphate. The polypeptide is Threonylcarbamoyl-AMP synthase (Shewanella sp. (strain MR-4)).